Consider the following 74-residue polypeptide: Protein DELETION OF SUV3 SUPPRESSOR 1(I) (74 aa).

The segment at 35 to 74 is disordered; it reads EKEEVKEVSQQWEDDWDDDDVNDDFSRQLRKELENGTDKK. The segment covering 46–57 has biased composition (acidic residues); it reads WEDDWDDDDVND. The span at 58–74 shows a compositional bias: basic and acidic residues; it reads DFSRQLRKELENGTDKK.

It belongs to the DSS1/SEM1 family. Part of the 26S proteasome. Interacts with BRCA2A and BRCA2B. Interacts with UCH1 and UCH2. Can form a tripartite complex with both RAD51 and BRCA2B or both DMC1 and BRCA2B.

Its function is as follows. Subunit of the 26S proteasome which plays a role in ubiquitin-dependent proteolysis. The chain is Protein DELETION OF SUV3 SUPPRESSOR 1(I) from Arabidopsis thaliana (Mouse-ear cress).